The primary structure comprises 41 residues: Omega-theraphotoxin-Hg1a (41 aa).

Cystine bridges form between cysteine 7–cysteine 21, cysteine 14–cysteine 26, and cysteine 20–cysteine 33.

The protein belongs to the neurotoxin 10 (Hwtx-1) family. 56 (SNX-482) subfamily. Expressed by the venom gland.

The protein resides in the secreted. In terms of biological role, toxin that blocks vertebrate P/Q-type (Cav2.1/CACNA1A) and R-type (Cav2.3/CACNA1E) voltage-gated calcium channels. Also inhibits sodium channels (Nav) in bovine chromaffin cells by delaying sodium channel inactivation. This is Omega-theraphotoxin-Hg1a from Hysterocrates gigas (Cameroon red baboon tarantula).